A 765-amino-acid chain; its full sequence is Zinc finger and BTB domain-containing protein 49 (765 aa).

Positions 25–91 (CDCMLVVKGV…MYTSHLDLNQ (67 aa)) constitute a BTB domain. 2 disordered regions span residues 165 to 203 (QQNKTLDESHPHASPSVNRHHSAGEISKQAPDTSDGSCT) and 275 to 294 (NFLAQPVNDSAPHPESDATC). 7 C2H2-type zinc fingers span residues 395 to 417 (YACELCGKPFKHPSNLELHKRSH), 423 to 445 (FECNICGKHFSQAGNLQTHLRRH), 451 to 473 (YICEICGKRFAASGDVQRHIIIH), 479 to 501 (HLCDICGRGFSNFSNLKEHKKTH), 507 to 529 (FTCDECGKSFNMQRKLVKHRIRH), 535 to 557 (YSCSACGKCFGGSGDLRRHVRTH), and 563 to 585 (YTCEICNKCFTRSAVLRRHKKMH).

The protein belongs to the krueppel C2H2-type zinc-finger protein family. In terms of assembly, isoform 1 interacts with EP300 and KAT5/Tip60. The interaction with EP300 is direct and leads to synergistic induction of CDKN1A. On the CDKN1A promoter, forms a complex with ZBTB17/Miz-1; this interaction leads to additive CDKN1A transactivation. Isoform 3 also interacts with ZBTB17; this interaction may block ZBTB17 repressor activity. Highly expressed in normal epidermis and in other epithelial tissues, including in colon and lung. Tends to be down-regulated in colon, lung and skin cancer tissues.

The protein localises to the cytoplasm. It is found in the nucleus. Transcription factor. Inhibits cell proliferation by activating either CDKN1A/p21 transcription or RB1 transcription. Its function is as follows. Binds CDKN1A promoter and activates its transcription; this activity is further potentiated in the presence of EP300 (synergistic) and ZBTB17/Miz-1 (additive). Functionally, activates RB1 transcription most probably by antagonizing ZBTB17 repression of RB1. Does not bind directly RB1 promoter. This chain is Zinc finger and BTB domain-containing protein 49 (ZBTB49), found in Homo sapiens (Human).